The primary structure comprises 282 residues: Bis(5'-nucleosyl)-tetraphosphatase, symmetrical (282 aa).

Belongs to the Ap4A hydrolase family.

It catalyses the reaction P(1),P(4)-bis(5'-adenosyl) tetraphosphate + H2O = 2 ADP + 2 H(+). Its function is as follows. Hydrolyzes diadenosine 5',5'''-P1,P4-tetraphosphate to yield ADP. This chain is Bis(5'-nucleosyl)-tetraphosphatase, symmetrical, found in Salmonella paratyphi A (strain ATCC 9150 / SARB42).